Reading from the N-terminus, the 288-residue chain is Oxaloacetate decarboxylase (288 aa).

A substrate-binding site is contributed by serine 47. Aspartate 85 contributes to the Mg(2+) binding site. Arginine 156 and histidine 232 together coordinate substrate.

Belongs to the isocitrate lyase/PEP mutase superfamily. Oxaloacetate decarboxylase family. As to quaternary structure, homotetramer; dimer of dimers. Mg(2+) is required as a cofactor.

The enzyme catalyses oxaloacetate + H(+) = pyruvate + CO2. Its function is as follows. Catalyzes the decarboxylation of oxaloacetate into pyruvate. Seems to play a role in maintaining cellular concentrations of bicarbonate and pyruvate. This chain is Oxaloacetate decarboxylase, found in Rhodopseudomonas palustris (strain TIE-1).